The sequence spans 132 residues: Small ribosomal subunit protein uS8 (132 aa).

This sequence belongs to the universal ribosomal protein uS8 family. As to quaternary structure, part of the 30S ribosomal subunit. Contacts proteins S5 and S12.

Functionally, one of the primary rRNA binding proteins, it binds directly to 16S rRNA central domain where it helps coordinate assembly of the platform of the 30S subunit. The sequence is that of Small ribosomal subunit protein uS8 from Borrelia garinii subsp. bavariensis (strain ATCC BAA-2496 / DSM 23469 / PBi) (Borreliella bavariensis).